The following is a 432-amino-acid chain: Protein prenyltransferase alpha subunit repeat-containing protein 1-A (432 aa).

PFTA repeat units follow at residues 86–119 (ELIDVTCTLLLLNPDFTTAWNVRKELIQSGTLNP), 121–154 (KDLQLGKLALTKFPKSPETWIHRRWALQRLVQEL), 179–212 (EEMHVCCEAAGRYPSNYNSWSHRIWVVQHLGNLK), 218–251 (DELSSTKHWVSMHVSDHSGFHYRQFLLKSLLSKT), 294–327 (EEMDLNRELVDSFPGHETLWCHRRQIFNLIHQLL), and 395–432 (SFDSELRFINCVLTNCCSPEQSRFAASYRKWLLSLQGH).

It belongs to the protein prenyltransferase subunit alpha family.

This chain is Protein prenyltransferase alpha subunit repeat-containing protein 1-A (ptar1-a), found in Xenopus laevis (African clawed frog).